We begin with the raw amino-acid sequence, 340 residues long: Phosphoribosylformylglycinamidine cyclo-ligase (340 aa).

Belongs to the AIR synthase family.

The protein localises to the cytoplasm. It catalyses the reaction 2-formamido-N(1)-(5-O-phospho-beta-D-ribosyl)acetamidine + ATP = 5-amino-1-(5-phospho-beta-D-ribosyl)imidazole + ADP + phosphate + H(+). The protein operates within purine metabolism; IMP biosynthesis via de novo pathway; 5-amino-1-(5-phospho-D-ribosyl)imidazole from N(2)-formyl-N(1)-(5-phospho-D-ribosyl)glycinamide: step 2/2. In Streptococcus pneumoniae (strain 70585), this protein is Phosphoribosylformylglycinamidine cyclo-ligase.